Consider the following 282-residue polypeptide: Probable endonuclease 4 (282 aa).

Zn(2+) contacts are provided by His-66, His-106, Glu-143, Asp-176, His-179, His-213, Asp-226, His-228, and Glu-258.

The protein belongs to the AP endonuclease 2 family. Zn(2+) serves as cofactor.

It catalyses the reaction Endonucleolytic cleavage to 5'-phosphooligonucleotide end-products.. Endonuclease IV plays a role in DNA repair. It cleaves phosphodiester bonds at apurinic or apyrimidinic (AP) sites, generating a 3'-hydroxyl group and a 5'-terminal sugar phosphate. This is Probable endonuclease 4 from Aquifex aeolicus (strain VF5).